A 179-amino-acid polypeptide reads, in one-letter code: Large ribosomal subunit protein uL5 (179 aa).

The protein belongs to the universal ribosomal protein uL5 family. Part of the 50S ribosomal subunit; part of the 5S rRNA/L5/L18/L25 subcomplex. Contacts the 5S rRNA and the P site tRNA. Forms a bridge to the 30S subunit in the 70S ribosome.

Functionally, this is one of the proteins that bind and probably mediate the attachment of the 5S RNA into the large ribosomal subunit, where it forms part of the central protuberance. In the 70S ribosome it contacts protein S13 of the 30S subunit (bridge B1b), connecting the 2 subunits; this bridge is implicated in subunit movement. Contacts the P site tRNA; the 5S rRNA and some of its associated proteins might help stabilize positioning of ribosome-bound tRNAs. The sequence is that of Large ribosomal subunit protein uL5 from Proteus mirabilis (strain HI4320).